Consider the following 90-residue polypeptide: UPF0297 protein OEOE_1166 (90 aa).

The protein belongs to the UPF0297 family.

The chain is UPF0297 protein OEOE_1166 from Oenococcus oeni (strain ATCC BAA-331 / PSU-1).